A 184-amino-acid chain; its full sequence is Cytochrome c homolog (184 aa).

Residues 1–10 (MDSFELNKIL) are Cytoplasmic-facing. Residues 11-31 (GAVLGTCLILLVTSFTANALF) traverse the membrane as a helical; Signal-anchor segment. Residues 32–184 (SPKMPEKPGF…HPKPLPTASK (153 aa)) lie on the Periplasmic side of the membrane. The heme c site is built by cysteine 84, cysteine 87, histidine 88, and methionine 151.

The protein belongs to the cytochrome c family. Binds 1 heme c group covalently per subunit.

Its subcellular location is the cell membrane. In terms of biological role, may be involved in electron transfer from bc1 complex to aa3. The sequence is that of Cytochrome c homolog (cycM) from Bradyrhizobium diazoefficiens (strain JCM 10833 / BCRC 13528 / IAM 13628 / NBRC 14792 / USDA 110).